Consider the following 1252-residue polypeptide: DNA-directed RNA polymerase subunit beta (1252 aa).

Belongs to the RNA polymerase beta chain family. In terms of assembly, the RNAP catalytic core consists of 2 alpha, 1 beta, 1 beta' and 1 omega subunit. When a sigma factor is associated with the core the holoenzyme is formed, which can initiate transcription.

It carries out the reaction RNA(n) + a ribonucleoside 5'-triphosphate = RNA(n+1) + diphosphate. In terms of biological role, DNA-dependent RNA polymerase catalyzes the transcription of DNA into RNA using the four ribonucleoside triphosphates as substrates. This Chlamydia caviae (strain ATCC VR-813 / DSM 19441 / 03DC25 / GPIC) (Chlamydophila caviae) protein is DNA-directed RNA polymerase subunit beta.